Here is a 273-residue protein sequence, read N- to C-terminus: MSKLQDVIVQEMKVKKRIDSAEEIMELKQFIKNYVQSHSFIKSLVLGISGGQDSTLVGKLVQMSVNELREEGIDCTFIAVKLPYGVQKDADEVEQALRFIEPDEIVTVNIKPAVDQSVQSLKEAGIVLTDFQKGNEKARERMKVQFSIASNRQGIVVGTDHSAENITGFYTKYGDGAADIAPIFGLNKRQGRQLLAYLGAPKELYEKTPTADLEDDKPQLPDEDALGVTYEAIDNYLEGKPVSPEEQKVIENHYIRNAHKRELAYTRYTWPKS.

Residue 47-54 coordinates ATP; it reads GISGGQDS. D53 is a binding site for Mg(2+). R139 provides a ligand contact to deamido-NAD(+). T159 contacts ATP. E164 serves as a coordination point for Mg(2+). Deamido-NAD(+) is bound by residues K172 and D179. ATP contacts are provided by K188 and T210. 259-260 serves as a coordination point for deamido-NAD(+); sequence HK.

It belongs to the NAD synthetase family. As to quaternary structure, homodimer.

It carries out the reaction deamido-NAD(+) + NH4(+) + ATP = AMP + diphosphate + NAD(+) + H(+). Its pathway is cofactor biosynthesis; NAD(+) biosynthesis; NAD(+) from deamido-NAD(+) (ammonia route): step 1/1. In terms of biological role, catalyzes the ATP-dependent amidation of deamido-NAD to form NAD. Uses ammonia as a nitrogen source. The chain is NH(3)-dependent NAD(+) synthetase from Staphylococcus aureus (strain bovine RF122 / ET3-1).